A 347-amino-acid chain; its full sequence is Oocyte-specific homeobox protein 6 (347 aa).

Disordered stretches follow at residues 1–20 (MLQY…HSKF) and 54–86 (PRSP…IQMQ). A compositionally biased stretch (polar residues) spans 72-85 (QESQGPSGKSSIQM). A DNA-binding region (homeobox) is located at residues 145-204 (HRKIRTVYTEEQKCVLKKHFHKCTYPSREQRMALAVLVGVTANEIQIWFKNHRAKSKRES).

The protein belongs to the paired homeobox family. Obox subfamily. In terms of tissue distribution, specifically expressed in early embryos.

It is found in the nucleus. Functionally, transcription factor required for zygotic genome activation (ZGA), a critical event in early embryonic development during which the developmental control passes from maternally provided mRNAs to the expression of the zygotic genome after fertilization. The polypeptide is Oocyte-specific homeobox protein 6 (Mus musculus (Mouse)).